The sequence spans 426 residues: Glucose-6-phosphate isomerase (426 aa).

The active-site Proton donor is the E282. Catalysis depends on residues H303 and K417.

Belongs to the GPI family.

It is found in the cytoplasm. The catalysed reaction is alpha-D-glucose 6-phosphate = beta-D-fructose 6-phosphate. The protein operates within carbohydrate biosynthesis; gluconeogenesis. It functions in the pathway carbohydrate degradation; glycolysis; D-glyceraldehyde 3-phosphate and glycerone phosphate from D-glucose: step 2/4. In terms of biological role, catalyzes the reversible isomerization of glucose-6-phosphate to fructose-6-phosphate. In Aster yellows witches'-broom phytoplasma (strain AYWB), this protein is Glucose-6-phosphate isomerase.